The primary structure comprises 118 residues: Small integral membrane protein 17 (118 aa).

Residues 1–84 (MQSLRPEQTR…DDESEGSQGF (84 aa)) are disordered. The segment covering 13–42 (LEPERTKTLLPRESRAWEKPPHPACTKDWE) has biased composition (basic and acidic residues). Residues 96–116 (IVLVVCVLFLFLVLTGMPMMF) traverse the membrane as a helical segment.

It localises to the membrane. In Homo sapiens (Human), this protein is Small integral membrane protein 17 (SMIM17).